The following is a 274-amino-acid chain: Orotidine 5'-phosphate decarboxylase (274 aa).

Residues D40, 62-64 (KTH), 93-102 (DRKFVDIGNT), Y227, and R245 each bind substrate. K95 functions as the Proton donor in the catalytic mechanism.

Belongs to the OMP decarboxylase family.

It catalyses the reaction orotidine 5'-phosphate + H(+) = UMP + CO2. The protein operates within pyrimidine metabolism; UMP biosynthesis via de novo pathway; UMP from orotate: step 2/2. The sequence is that of Orotidine 5'-phosphate decarboxylase (URA3) from Coccidioides posadasii (strain RMSCC 757 / Silveira) (Valley fever fungus).